A 180-amino-acid chain; its full sequence is 4-hydroxy-3-methylbut-2-enyl diphosphate reductase (180 aa).

Residue C12 participates in [4Fe-4S] cluster binding. Positions 41 and 74 each coordinate (2E)-4-hydroxy-3-methylbut-2-enyl diphosphate. Dimethylallyl diphosphate contacts are provided by H41 and H74. 2 residues coordinate isopentenyl diphosphate: H41 and H74. A [4Fe-4S] cluster-binding site is contributed by C96. Residue H124 participates in (2E)-4-hydroxy-3-methylbut-2-enyl diphosphate binding. A dimethylallyl diphosphate-binding site is contributed by H124. H124 is a binding site for isopentenyl diphosphate. The active-site Proton donor is the E126. Residue T168 coordinates (2E)-4-hydroxy-3-methylbut-2-enyl diphosphate.

Belongs to the IspH family. The cofactor is [4Fe-4S] cluster.

It carries out the reaction isopentenyl diphosphate + 2 oxidized [2Fe-2S]-[ferredoxin] + H2O = (2E)-4-hydroxy-3-methylbut-2-enyl diphosphate + 2 reduced [2Fe-2S]-[ferredoxin] + 2 H(+). The enzyme catalyses dimethylallyl diphosphate + 2 oxidized [2Fe-2S]-[ferredoxin] + H2O = (2E)-4-hydroxy-3-methylbut-2-enyl diphosphate + 2 reduced [2Fe-2S]-[ferredoxin] + 2 H(+). It participates in isoprenoid biosynthesis; dimethylallyl diphosphate biosynthesis; dimethylallyl diphosphate from (2E)-4-hydroxy-3-methylbutenyl diphosphate: step 1/1. It functions in the pathway isoprenoid biosynthesis; isopentenyl diphosphate biosynthesis via DXP pathway; isopentenyl diphosphate from 1-deoxy-D-xylulose 5-phosphate: step 6/6. Functionally, catalyzes the conversion of 1-hydroxy-2-methyl-2-(E)-butenyl 4-diphosphate (HMBPP) into a mixture of isopentenyl diphosphate (IPP) and dimethylallyl diphosphate (DMAPP). Acts in the terminal step of the DOXP/MEP pathway for isoprenoid precursor biosynthesis. This Pseudomonas fluorescens protein is 4-hydroxy-3-methylbut-2-enyl diphosphate reductase.